The following is a 209-amino-acid chain: Uracil phosphoribosyltransferase (209 aa).

5-phospho-alpha-D-ribose 1-diphosphate-binding positions include Arg79, Arg104, and 131-139; that span reads DPMLATGGS. Uracil contacts are provided by residues Ile194 and 199–201; that span reads GDA. Asp200 contributes to the 5-phospho-alpha-D-ribose 1-diphosphate binding site.

Belongs to the UPRTase family. The cofactor is Mg(2+).

The enzyme catalyses UMP + diphosphate = 5-phospho-alpha-D-ribose 1-diphosphate + uracil. It functions in the pathway pyrimidine metabolism; UMP biosynthesis via salvage pathway; UMP from uracil: step 1/1. Its activity is regulated as follows. Allosterically activated by GTP. Its function is as follows. Catalyzes the conversion of uracil and 5-phospho-alpha-D-ribose 1-diphosphate (PRPP) to UMP and diphosphate. This Clostridium beijerinckii (strain ATCC 51743 / NCIMB 8052) (Clostridium acetobutylicum) protein is Uracil phosphoribosyltransferase.